A 182-amino-acid polypeptide reads, in one-letter code: Riboflavin kinase (182 aa).

Residues Thr39 and Asn41 each contribute to the Mg(2+) site. The Nucleophile role is filled by Glu117.

The protein belongs to the flavokinase family. Requires Zn(2+) as cofactor. It depends on Mg(2+) as a cofactor.

The catalysed reaction is riboflavin + ATP = FMN + ADP + H(+). Its pathway is cofactor biosynthesis; FMN biosynthesis; FMN from riboflavin (ATP route): step 1/1. Its function is as follows. Catalyzes the phosphorylation of riboflavin (vitamin B2) to form flavin mononucleotide (FMN) coenzyme. The sequence is that of Riboflavin kinase (FMN1) from Lodderomyces elongisporus (strain ATCC 11503 / CBS 2605 / JCM 1781 / NBRC 1676 / NRRL YB-4239) (Yeast).